We begin with the raw amino-acid sequence, 310 residues long: Methionyl-tRNA formyltransferase (310 aa).

Residue serine 111 to proline 114 coordinates (6S)-5,6,7,8-tetrahydrofolate.

It belongs to the Fmt family.

The catalysed reaction is L-methionyl-tRNA(fMet) + (6R)-10-formyltetrahydrofolate = N-formyl-L-methionyl-tRNA(fMet) + (6S)-5,6,7,8-tetrahydrofolate + H(+). Attaches a formyl group to the free amino group of methionyl-tRNA(fMet). The formyl group appears to play a dual role in the initiator identity of N-formylmethionyl-tRNA by promoting its recognition by IF2 and preventing the misappropriation of this tRNA by the elongation apparatus. The protein is Methionyl-tRNA formyltransferase of Finegoldia magna (strain ATCC 29328 / DSM 20472 / WAL 2508) (Peptostreptococcus magnus).